A 386-amino-acid chain; its full sequence is Tetratricopeptide repeat protein 4 (386 aa).

Methionine 1 is modified (N-acetylmethionine). At serine 51 the chain carries Phosphoserine. TPR repeat units lie at residues 79–112 (AKTYKDEGNDYFKEKDYKKAVLSYSEGLKKKCAD), 117–150 (AVLYTNRAAAQYYLGNVRSSLNDVLAAKKLKPGH), and 151–184 (LKAIIRGALCHLELKHFAEAVNWCDEGLQIDAKE). Position 244 is a phosphoserine (serine 244).

It belongs to the TTC4 family. In terms of assembly, interacts (via TPR repeats) with HSP90AB1. Interacts with HSPA8, CDC6 and TBK1. Interacts with isoform 1 and isoform 3 of MSL1. Expressed at high levels in the heart, testis, kidney, brain and tongue. Expressed at low levels in the stomach, lung and liver.

It localises to the nucleus. The protein localises to the nucleoplasm. It is found in the cytoplasm. Its function is as follows. May act as a co-chaperone for HSP90AB1. The chain is Tetratricopeptide repeat protein 4 (Ttc4) from Mus musculus (Mouse).